The chain runs to 218 residues: UPF0598 protein C8orf82 homolog (218 aa).

Belongs to the UPF0598 family.

In Rattus norvegicus (Rat), this protein is UPF0598 protein C8orf82 homolog.